The primary structure comprises 403 residues: Malate dehydrogenase, chloroplastic (403 aa).

A chloroplast-targeting transit peptide spans 1–80; it reads MATATSASLF…DKKPYGFKIN (80 aa). Residues 89-95 and aspartate 115 contribute to the NAD(+) site; that span reads GAAGGIG. The substrate site is built by arginine 162 and arginine 168. Residues asparagine 175 and 198-200 each bind NAD(+); that span reads ISN. Substrate is bound by residues asparagine 200 and arginine 234. Histidine 258 functions as the Proton acceptor in the catalytic mechanism. Methionine 309 is an NAD(+) binding site.

Belongs to the LDH/MDH superfamily. MDH type 1 family. As to quaternary structure, homodimer. As to expression, expressed in rosette leaves. Expressed in meristematic regions of roots and shoots, cotyledons, young leaves, trichomes, stamen, pollen, tapetum, gynoecium and ovules.

The protein localises to the plastid. Its subcellular location is the chloroplast stroma. It catalyses the reaction (S)-malate + NAD(+) = oxaloacetate + NADH + H(+). Catalyzes a reversible NAD-dependent dehydrogenase reaction involved in central metabolism and redox homeostasis between organelle compartments. Plays a key role in the metabolism of dark chloroplasts and non-green plastids. Essential for embryo viability. Plays an essential role in heterotrophic metabolism in embryos, and autotrophic metabolism in photosynthetic tissues as well. This chain is Malate dehydrogenase, chloroplastic, found in Arabidopsis thaliana (Mouse-ear cress).